The following is a 505-amino-acid chain: Zinc metalloproteinase/disintegrin (505 aa).

Residues 1 to 20 (MIQVLLVIICLAAFPYQGTS) form the signal peptide. Residues 21–214 (IILESGNVND…PIKKASQSNL (194 aa)) constitute a propeptide that is removed on maturation. Tandem repeats lie at residues 153–179 (KYED…YEPI) and 180–206 (KYED…YEPI). The Peptidase M12B domain maps to 220-416 (RYIELVIVAD…QKPQCILNKP (197 aa)). 2 residues coordinate Ca(2+): glutamate 223 and aspartate 307. Histidine 356 is a binding site for Zn(2+). Glutamate 357 is an active-site residue. Residues histidine 360 and histidine 366 each coordinate Zn(2+). Intrachain disulfides connect cysteine 371–cysteine 395 and cysteine 373–cysteine 378. The Ca(2+) site is built by cysteine 411 and asparagine 414. The propeptide occupies 417 to 432 (LRTDTVSTPVSGNELL). In terms of domain architecture, Disintegrin spans 424 to 505 (TPVSGNELLE…AGCPRNPFHA (82 aa)). 6 disulfides stabilise this stretch: cysteine 438–cysteine 453, cysteine 440–cysteine 448, cysteine 447–cysteine 470, cysteine 461–cysteine 467, cysteine 466–cysteine 491, and cysteine 479–cysteine 498. Residues 483–485 (RGD) carry the Cell attachment site motif.

Belongs to the venom metalloproteinase (M12B) family. P-II subfamily. P-IIa sub-subfamily. In terms of assembly, monomer. The cofactor is Zn(2+). As to expression, expressed by the venom gland.

The protein localises to the secreted. In terms of biological role, impairs hemostasis in the envenomed animal. Inhibits platelet aggregation induced by ADP, thrombin, platelet-activating factor and collagen. Acts by inhibiting fibrinogen interaction with platelet receptors GPIIb/GPIIIa (ITGA2B/ITGB3). The protein is Zinc metalloproteinase/disintegrin of Gloydius brevicauda (Korean slamosa snake).